Reading from the N-terminus, the 504-residue chain is Probable chlorophyll(ide) b reductase NYC1, chloroplastic (504 aa).

The N-terminal 33 residues, 1-33, are a transit peptide targeting the chloroplast; that stretch reads MAAAAVVHLSVHGRLRRSPELHARPYHRPSLLR. The disordered stretch occupies residues 41–63; the sequence is ADNGGEEASSSPPPPTTAEARRR. 2 consecutive transmembrane segments (helical) span residues 114–134 and 141–161; these read YVIT…LSGG and LIWY…ANSV. 175 to 199 is a binding site for NAD(+); sequence ITGSTRGLGKALAREFLLSGDRVVI. Residue Y339 is the Proton acceptor of the active site. The chain crosses the membrane as a helical span at residues 479-499; it reads WVSVFSLSVVCAFIILSSSGG.

Belongs to the short-chain dehydrogenases/reductases (SDR) family. As to quaternary structure, interacts with NOL to form a complex that acts as a chlorophyll b reductase. In terms of tissue distribution, expressed in leaves and stems. Also detected in non-photosynthetic tissues such as roots.

It localises to the plastid. Its subcellular location is the chloroplast thylakoid membrane. The catalysed reaction is 7(1)-hydroxychlorophyllide a + NAD(+) = chlorophyllide b + NADH + H(+). It catalyses the reaction 7(1)-hydroxychlorophyllide a + NADP(+) = chlorophyllide b + NADPH + H(+). In terms of biological role, required for proper chloroplast degradation. Involved in chlorophyll b degradation. The protein is Probable chlorophyll(ide) b reductase NYC1, chloroplastic (NYC1) of Oryza sativa subsp. japonica (Rice).